The chain runs to 405 residues: Histone deacetylase clr6 (405 aa).

Positions 6–318 (KKVSYFYDED…WTYETGLLAG (313 aa)) are histone deacetylase. H138 is an active-site residue.

It belongs to the histone deacetylase family. HD type 1 subfamily. Heterotetramer of alp13, clr6, prw1 and pst2.

It is found in the nucleus. The enzyme catalyses N(6)-acetyl-L-lysyl-[histone] + H2O = L-lysyl-[histone] + acetate. Functionally, responsible for the deacetylation of lysine residues on the N-terminal part of the core histones (H2A, H2B, H3 and H4). Histone deacetylation gives a tag for epigenetic repression and plays an important role in transcriptional regulation, cell cycle progression and developmental events. Histone deacetylases act via the formation of large multiprotein complexes. Has a role in chromatin assembly and chromosome segregation. The sequence is that of Histone deacetylase clr6 (clr6) from Schizosaccharomyces pombe (strain 972 / ATCC 24843) (Fission yeast).